A 53-amino-acid chain; its full sequence is MTKTPFKTKYGQGSKVCKRCGRKGPGIIRKYGLNLCRQCFRELAPKLGFKKYD.

Zn(2+) contacts are provided by C17, C20, C36, and C39.

This sequence belongs to the universal ribosomal protein uS14 family. Zinc-binding uS14 subfamily. Part of the 30S ribosomal subunit. It depends on Zn(2+) as a cofactor.

In terms of biological role, binds 16S rRNA, required for the assembly of 30S particles. This Methanococcus maripaludis (strain DSM 14266 / JCM 13030 / NBRC 101832 / S2 / LL) protein is Small ribosomal subunit protein uS14.